A 1342-amino-acid chain; its full sequence is DNA-directed RNA polymerase subunit beta (1342 aa).

Belongs to the RNA polymerase beta chain family. As to quaternary structure, the RNAP catalytic core consists of 2 alpha, 1 beta, 1 beta' and 1 omega subunit. When a sigma factor is associated with the core the holoenzyme is formed, which can initiate transcription.

The catalysed reaction is RNA(n) + a ribonucleoside 5'-triphosphate = RNA(n+1) + diphosphate. Its function is as follows. DNA-dependent RNA polymerase catalyzes the transcription of DNA into RNA using the four ribonucleoside triphosphates as substrates. This is DNA-directed RNA polymerase subunit beta from Aeromonas hydrophila subsp. hydrophila (strain ATCC 7966 / DSM 30187 / BCRC 13018 / CCUG 14551 / JCM 1027 / KCTC 2358 / NCIMB 9240 / NCTC 8049).